The sequence spans 262 residues: 5'-nucleotidase SurE (262 aa).

Positions 8, 9, 40, and 92 each coordinate a divalent metal cation.

The protein belongs to the SurE nucleotidase family. It depends on a divalent metal cation as a cofactor.

The protein resides in the cytoplasm. The catalysed reaction is a ribonucleoside 5'-phosphate + H2O = a ribonucleoside + phosphate. Nucleotidase that shows phosphatase activity on nucleoside 5'-monophosphates. In Xylella fastidiosa (strain 9a5c), this protein is 5'-nucleotidase SurE.